Here is a 342-residue protein sequence, read N- to C-terminus: UHRF1-like protein (342 aa).

Positions 41–149 are disordered; the sequence is SEATTLATPS…SHPGSEEEDI (109 aa). Polar residues predominate over residues 42 to 59; sequence EATTLATPSNLKTAGNQR. The segment covering 74–90 has biased composition (basic and acidic residues); that stretch reads NRSDSPRKRPTKDREDL. Over residues 115–141 the composition is skewed to polar residues; that stretch reads TREQVTFNSDRDTPNTPSRQIKSTHSH. The region spanning 168–322 is the YDG domain; that stretch reads GHIPGIGVGK…LMVCRYAFKR (155 aa). Aspartate 218 is a binding site for DNA. Residues 236-257 form a disordered region; that stretch reads KGTKQNPKNLRTAPQTSHQSFD. Positions 238 to 257 are enriched in polar residues; the sequence is TKQNPKNLRTAPQTSHQSFD.

Its subcellular location is the nucleus. Its function is as follows. Involved in the maintenance of DNA methylation. Binds hemimethylated DNA. The polypeptide is UHRF1-like protein (Cryptococcus neoformans var. grubii serotype A (strain H99 / ATCC 208821 / CBS 10515 / FGSC 9487) (Filobasidiella neoformans var. grubii)).